Here is a 350-residue protein sequence, read N- to C-terminus: MEHISGNSPEQVRERSAAVTGAVEESELKLSAVTMVPVESLLPSDSPRSAGEDVEHIRTLAASGAELPAIVVMPTTKRVIDGMHRLRATKMRGATEIAVRYFEGGEEEAFIFAVKSNVTHGLPLSLDDRKAAATRVLETHPSWSDRAIGLATGLSAKTVGTLRSCSTAGVPQSNVRIGRDGRARPLDPTEGRKLASRLLQENPSASLRQIAAQAGVSPSTASDVRKRLSRGESPLPERDRQQEVPAVARTPARVSRADGSWAPHTVALRHLSRDPSVRLTEDGRALLRWLNVVAVRNQDWDRLLGNVPPHCVKVIAELARGCADIWHRVAEELDQAGIDEAAGRSLSDVG.

A compositionally biased stretch (polar residues) spans 1–10 (MEHISGNSPE). Disordered stretches follow at residues 1–20 (MEHI…AAVT), 168–189 (AGVP…LDPT), and 211–258 (AAQA…SRAD). Composition is skewed to basic and acidic residues over residues 177–189 (IGRD…LDPT) and 223–242 (DVRK…DRQQ).

This chain is Streptomycin biosynthesis operon possible regulatory protein (strR), found in Streptomyces griseus.